Here is a 309-residue protein sequence, read N- to C-terminus: 4-hydroxy-3-methylbut-2-enyl diphosphate reductase (309 aa).

Residue C12 coordinates [4Fe-4S] cluster. 2 residues coordinate (2E)-4-hydroxy-3-methylbut-2-enyl diphosphate: H41 and H74. Positions 41 and 74 each coordinate dimethylallyl diphosphate. Positions 41 and 74 each coordinate isopentenyl diphosphate. C96 lines the [4Fe-4S] cluster pocket. H124 is a (2E)-4-hydroxy-3-methylbut-2-enyl diphosphate binding site. H124 contributes to the dimethylallyl diphosphate binding site. Residue H124 coordinates isopentenyl diphosphate. E126 (proton donor) is an active-site residue. Residue T167 participates in (2E)-4-hydroxy-3-methylbut-2-enyl diphosphate binding. Position 197 (C197) interacts with [4Fe-4S] cluster. (2E)-4-hydroxy-3-methylbut-2-enyl diphosphate contacts are provided by S225, S226, N227, and S269. Dimethylallyl diphosphate contacts are provided by S225, S226, N227, and S269. 4 residues coordinate isopentenyl diphosphate: S225, S226, N227, and S269.

Belongs to the IspH family. Requires [4Fe-4S] cluster as cofactor.

It catalyses the reaction isopentenyl diphosphate + 2 oxidized [2Fe-2S]-[ferredoxin] + H2O = (2E)-4-hydroxy-3-methylbut-2-enyl diphosphate + 2 reduced [2Fe-2S]-[ferredoxin] + 2 H(+). The enzyme catalyses dimethylallyl diphosphate + 2 oxidized [2Fe-2S]-[ferredoxin] + H2O = (2E)-4-hydroxy-3-methylbut-2-enyl diphosphate + 2 reduced [2Fe-2S]-[ferredoxin] + 2 H(+). It functions in the pathway isoprenoid biosynthesis; dimethylallyl diphosphate biosynthesis; dimethylallyl diphosphate from (2E)-4-hydroxy-3-methylbutenyl diphosphate: step 1/1. It participates in isoprenoid biosynthesis; isopentenyl diphosphate biosynthesis via DXP pathway; isopentenyl diphosphate from 1-deoxy-D-xylulose 5-phosphate: step 6/6. Catalyzes the conversion of 1-hydroxy-2-methyl-2-(E)-butenyl 4-diphosphate (HMBPP) into a mixture of isopentenyl diphosphate (IPP) and dimethylallyl diphosphate (DMAPP). Acts in the terminal step of the DOXP/MEP pathway for isoprenoid precursor biosynthesis. This chain is 4-hydroxy-3-methylbut-2-enyl diphosphate reductase, found in Shewanella halifaxensis (strain HAW-EB4).